The sequence spans 61 residues: Photosystem II reaction center protein K (61 aa).

A propeptide spanning residues 1 to 24 (MINIVSLVCIYINSVPYSSIFFLD) is cleaved from the precursor. A helical transmembrane segment spans residues 36 to 56 (IVDIMPVIPLFFFLLAFVWQA).

This sequence belongs to the PsbK family. As to quaternary structure, PSII is composed of 1 copy each of membrane proteins PsbA, PsbB, PsbC, PsbD, PsbE, PsbF, PsbH, PsbI, PsbJ, PsbK, PsbL, PsbM, PsbT, PsbX, PsbY, PsbZ, Psb30/Ycf12, at least 3 peripheral proteins of the oxygen-evolving complex and a large number of cofactors. It forms dimeric complexes.

The protein localises to the plastid. It localises to the chloroplast thylakoid membrane. Functionally, one of the components of the core complex of photosystem II (PSII). PSII is a light-driven water:plastoquinone oxidoreductase that uses light energy to abstract electrons from H(2)O, generating O(2) and a proton gradient subsequently used for ATP formation. It consists of a core antenna complex that captures photons, and an electron transfer chain that converts photonic excitation into a charge separation. The sequence is that of Photosystem II reaction center protein K from Lotus japonicus (Lotus corniculatus var. japonicus).